A 454-amino-acid chain; its full sequence is MFDLEKFWDSFNAEMRSEFNEVSYNAWFKNTKPVSFNKDTHELVISVQTPVAKGYWEQNISANLIQSAYAYAGIDIYPVFVVKNGPTPSSERMLEPQPQAKPEKARPQGREFTKDLRLNEKYTFENFIQGEGNKLAAGAALAVADNPGTFYNPLFIFGGVGLGKTHLMQAIGHQMLAERPDAKVVYIQSETFVNDFINSIKNKTQDKFREKYRTADLLLVDDIQFFAKKEGIQEEFFHTFETLYNDQKQIVMTSDRLPTEIPDLSERLVSRFAWGLQVEITPPDLETRIAILRKKAESEGLEIDESTLDYVASQVDTNIRELEGALVKVQAQATIQKQDINIGLARSALADLKLVQKSRGLQISKIQEVVANYFQTSVPDLKGKKRVRQIVIPRQIAMYLSRELTDASLPKIGQEFGGKDHTTVMHACDKIARQIKTDTEIKSAVSDLRQMLER.

A domain I, interacts with DnaA modulators region spans residues 1–74 (MFDLEKFWDS…IQSAYAYAGI (74 aa)). A domain II region spans residues 74-116 (IDIYPVFVVKNGPTPSSERMLEPQPQAKPEKARPQGREFTKDL). The interval 88–112 (PSSERMLEPQPQAKPEKARPQGREF) is disordered. The segment covering 101-112 (KPEKARPQGREF) has biased composition (basic and acidic residues). Positions 117 to 333 (RLNEKYTFEN…GALVKVQAQA (217 aa)) are domain III, AAA+ region. The ATP site is built by G161, G163, K164, and T165. The interval 334–454 (TIQKQDINIG…VSDLRQMLER (121 aa)) is domain IV, binds dsDNA.

The protein belongs to the DnaA family. Oligomerizes as a right-handed, spiral filament on DNA at oriC.

Its subcellular location is the cytoplasm. Plays an essential role in the initiation and regulation of chromosomal replication. ATP-DnaA binds to the origin of replication (oriC) to initiate formation of the DNA replication initiation complex once per cell cycle. Binds the DnaA box (a 9 base pair repeat at the origin) and separates the double-stranded (ds)DNA. Forms a right-handed helical filament on oriC DNA; dsDNA binds to the exterior of the filament while single-stranded (ss)DNA is stabiized in the filament's interior. The ATP-DnaA-oriC complex binds and stabilizes one strand of the AT-rich DNA unwinding element (DUE), permitting loading of DNA polymerase. After initiation quickly degrades to an ADP-DnaA complex that is not apt for DNA replication. Binds acidic phospholipids. The polypeptide is Chromosomal replication initiator protein DnaA (Lactobacillus delbrueckii subsp. bulgaricus (strain ATCC 11842 / DSM 20081 / BCRC 10696 / JCM 1002 / NBRC 13953 / NCIMB 11778 / NCTC 12712 / WDCM 00102 / Lb 14)).